A 170-amino-acid chain; its full sequence is 6,7-dimethyl-8-ribityllumazine synthase (170 aa).

5-amino-6-(D-ribitylamino)uracil is bound by residues Trp-25, Ala-57–Glu-59, and Ala-79–Ile-81. Residue Asp-84–Thr-85 coordinates (2S)-2-hydroxy-3-oxobutyl phosphate. The Proton donor role is filled by His-87. Asn-112 is a 5-amino-6-(D-ribitylamino)uracil binding site. Arg-126 contacts (2S)-2-hydroxy-3-oxobutyl phosphate.

This sequence belongs to the DMRL synthase family.

The catalysed reaction is (2S)-2-hydroxy-3-oxobutyl phosphate + 5-amino-6-(D-ribitylamino)uracil = 6,7-dimethyl-8-(1-D-ribityl)lumazine + phosphate + 2 H2O + H(+). The protein operates within cofactor biosynthesis; riboflavin biosynthesis; riboflavin from 2-hydroxy-3-oxobutyl phosphate and 5-amino-6-(D-ribitylamino)uracil: step 1/2. Functionally, catalyzes the formation of 6,7-dimethyl-8-ribityllumazine by condensation of 5-amino-6-(D-ribitylamino)uracil with 3,4-dihydroxy-2-butanone 4-phosphate. This is the penultimate step in the biosynthesis of riboflavin. In Thermobifida fusca (strain YX), this protein is 6,7-dimethyl-8-ribityllumazine synthase.